We begin with the raw amino-acid sequence, 37 residues long: Cytochrome b6-f complex subunit 5 (37 aa).

Residues Phe5–Ala25 traverse the membrane as a helical segment.

It belongs to the PetG family. In terms of assembly, the 4 large subunits of the cytochrome b6-f complex are cytochrome b6, subunit IV (17 kDa polypeptide, PetD), cytochrome f and the Rieske protein, while the 4 small subunits are PetG, PetL, PetM and PetN. The complex functions as a dimer.

The protein localises to the plastid. It localises to the chloroplast thylakoid membrane. Component of the cytochrome b6-f complex, which mediates electron transfer between photosystem II (PSII) and photosystem I (PSI), cyclic electron flow around PSI, and state transitions. PetG is required for either the stability or assembly of the cytochrome b6-f complex. The protein is Cytochrome b6-f complex subunit 5 of Daucus carota (Wild carrot).